The sequence spans 102 residues: Small ribosomal subunit protein uS10 (102 aa).

It belongs to the universal ribosomal protein uS10 family. Part of the 30S ribosomal subunit.

Its function is as follows. Involved in the binding of tRNA to the ribosomes. This chain is Small ribosomal subunit protein uS10, found in Clostridium perfringens (strain ATCC 13124 / DSM 756 / JCM 1290 / NCIMB 6125 / NCTC 8237 / Type A).